An 836-amino-acid chain; its full sequence is Glutamate receptor ionotropic, kainate glr-3 (836 aa).

An N-terminal signal peptide occupies residues 1-19; it reads MFWIAKTLIAFLILLKTDC. Over 20-523 the chain is Extracellular; that stretch reads YKIAIPANLI…WFKFMDPLST (504 aa). A disulfide bond links cysteine 76 and cysteine 320. Residues asparagine 225, asparagine 257, asparagine 356, asparagine 391, and asparagine 419 are each glycosylated (N-linked (GlcNAc...) asparagine). Residues 478–480 and arginine 485 contribute to the L-glutamate site; that span reads SLT. A helical membrane pass occupies residues 524–544; it reads QVWIMTFASYFVVSVAIWIIA. Over 545–600 the chain is Cytoplasmic; the sequence is KISPYEQFERDEDNGQYKPVDNQFSLRNSFWFTVCSLMQQGSELCPRAASTRLLTG. The helical transmembrane segment at 601–621 threads the bilayer; sequence IWWFFALILISSYTANLAAVL. Over 622–780 the chain is Extracellular; it reads TTRRMETPIE…KRKDQDDGES (159 aa). An L-glutamate-binding site is contributed by 651 to 652; it reads ST. An N-linked (GlcNAc...) asparagine glycan is attached at asparagine 657. Glutamate 699 is a binding site for L-glutamate. The helical transmembrane segment at 781 to 801 threads the bilayer; sequence IGGIFIILVVGLVLTAVLVIF. Topologically, residues 802 to 836 are cytoplasmic; sequence ELITTRKPSPAQSQVIRHVNVIPSFKLGFFRWNVN.

This sequence belongs to the glutamate-gated ion channel (TC 1.A.10.1) family. In terms of tissue distribution, expressed in the intestine and in the ASER neuron. Also expressed in the thermosensitive RIA interneuron.

The protein localises to the cell membrane. Its subcellular location is the postsynaptic cell membrane. Activated by low temperature of 18 degrees Celsius in ASER neuron. In terms of biological role, ionotropic glutamate receptor. Activation by glutamate requires additional verification. L-glutamate acts as an excitatory neurotransmitter at many synapses in the central nervous system. Binding of the excitatory neurotransmitter L-glutamate induces a conformation change, leading to the opening of the cation channel, and thereby converts the chemical signal to an electrical impulse. The receptor then desensitizes rapidly and enters a transient inactive state, characterized by the presence of bound agonist. Its function is as follows. Independent of its ionotropic glutamate receptor activity, acts as a thermoreceptor in the ASER neuron where it triggers a calcium response to activate cold avoidance behavior in response to temperatures below 19 degrees Celsius. Possibly functions as a metabotropic cold receptor and acts upstream of the G(o) G protein goa-1 in the ASER neuron. Also functions in cold sensing in the intestine. This is Glutamate receptor ionotropic, kainate glr-3 from Caenorhabditis elegans.